The primary structure comprises 237 residues: uncharacterized protein (237 aa).

An N-acetyltransferase domain is found at 119-237 (VTVRRLTPTD…PAGLDGGLPA (119 aa)).

This is an uncharacterized protein from Streptomyces virginiae (Streptomyces cinnamonensis).